A 230-amino-acid chain; its full sequence is 2-phytyl-1,4-naphtoquinone methyltransferase (230 aa).

The protein belongs to the class I-like SAM-binding methyltransferase superfamily. MenG/UbiE family.

The catalysed reaction is demethylphylloquinol + S-adenosyl-L-methionine = phylloquinol + S-adenosyl-L-homocysteine + H(+). It participates in cofactor biosynthesis; phylloquinone biosynthesis. In terms of biological role, methyltransferase required for the conversion of 2-phytyl-1,4-beta-naphthoquinol to phylloquinol. This chain is 2-phytyl-1,4-naphtoquinone methyltransferase, found in Nostoc punctiforme (strain ATCC 29133 / PCC 73102).